We begin with the raw amino-acid sequence, 109 residues long: EPIDERMAL PATTERNING FACTOR-like protein 4 (109 aa).

A signal peptide spans 1–26 (MGTFRRRRRFLLAALVTFALLHLFSA). 3 cysteine pairs are disulfide-bonded: Cys-66–Cys-100, Cys-70–Cys-76, and Cys-73–Cys-102.

Belongs to the plant cysteine rich small secretory peptide family. Epidermal patterning factor subfamily. In terms of assembly, interacts with ERECTA. In terms of tissue distribution, expressed at the base of the apical meristem at 3 days after germination. Not detected in the hypocotyl. Expressed in developing stems soon after bolting, in inflorescence stems and in young siliques.

Its subcellular location is the secreted. Acts primarily as positive regulator of inflorescence growth. Endodermal expression is sufficient for proper inflorescence architecture. Redundantly involved with EPFL6 in procambial development regulation. Controls stomatal patterning. Mediates stomatal development inhibition. TMM (AC Q9SSD1) functions to dampen or block CLL2 signaling. Acts as a growth-regulatory ligand for ERECTA family receptors. This is EPIDERMAL PATTERNING FACTOR-like protein 4 from Arabidopsis thaliana (Mouse-ear cress).